Here is a 306-residue protein sequence, read N- to C-terminus: MALKHFLQFNDLNADELAHIFERTRWIKEQFKAYQQYWPLTDRTLVMIFEKASTRTRLSFEAGMQQLGGSAIYLNTRDSQLGRGEPVEDAAQVISRMSDIVMIRTFEQEIIERFAANSRVPVINGLTNEYHPCQILADIFTYIEHRGSIKGKTVAWIGDSNNVCNTWLQAAEVLDFNVHVSTPPGYEVEPERANLYGTDHYEEFTDPMEAARGADLVTTDVWTSMGFEAENEERRRDFHDWQVDADMMRVAGKDALFMHCLPAHRGEEVTADVIDGAQSVVWDEAENRLHVQKALMEYLLLGKVQV.

Residues 53 to 56, Gln-80, Arg-104, and 131 to 134 each bind carbamoyl phosphate; these read STRT and HPCQ. Residues Asn-162, Asp-220, and 224 to 225 each bind L-ornithine; that span reads SM. Carbamoyl phosphate-binding positions include 260–261 and Arg-288; that span reads CL.

This sequence belongs to the aspartate/ornithine carbamoyltransferase superfamily. OTCase family.

The protein resides in the cytoplasm. It carries out the reaction carbamoyl phosphate + L-ornithine = L-citrulline + phosphate + H(+). It participates in amino-acid biosynthesis; L-arginine biosynthesis; L-arginine from L-ornithine and carbamoyl phosphate: step 1/3. In terms of biological role, reversibly catalyzes the transfer of the carbamoyl group from carbamoyl phosphate (CP) to the N(epsilon) atom of ornithine (ORN) to produce L-citrulline. The protein is Ornithine carbamoyltransferase of Methylobacillus flagellatus (strain ATCC 51484 / DSM 6875 / VKM B-1610 / KT).